The following is a 212-amino-acid chain: Methylthioribulose-1-phosphate dehydratase (212 aa).

Zn(2+) is bound by residues His-97 and His-99.

The protein belongs to the aldolase class II family. MtnB subfamily. Homotetramer. The cofactor is Zn(2+).

It catalyses the reaction 5-(methylsulfanyl)-D-ribulose 1-phosphate = 5-methylsulfanyl-2,3-dioxopentyl phosphate + H2O. It participates in amino-acid biosynthesis; L-methionine biosynthesis via salvage pathway; L-methionine from S-methyl-5-thio-alpha-D-ribose 1-phosphate: step 2/6. Functionally, catalyzes the dehydration of methylthioribulose-1-phosphate (MTRu-1-P) into 2,3-diketo-5-methylthiopentyl-1-phosphate (DK-MTP-1-P). This chain is Methylthioribulose-1-phosphate dehydratase, found in Bacillus cereus (strain ZK / E33L).